A 414-amino-acid polypeptide reads, in one-letter code: MAGCVVGEPASAPGQRVTLLAIDGGGIRGLIPGTILAFLEARLQELDGPDARLADYFDCIAGTSTGGLITAMLAAPGDHGRPLFAASDINRFYLDNGPRIFPQKRCGMAAAMAALTRPRYNGKYLQGKIRKMLGETRVRDTLTNVVIPTFDVRLLQPTIFSTYDAKSMPLKNALLSDICISTSAAPTYLPAHCFQTTDDATGKVREFDLIDGGVAANNPTMVAMTQITKKIMVKDKEELYPVKPSDCGKFLVLSLGTGSTSDQGMYTARQCSRWGIVRWLRNKGMAPIIDIFMAASSDLVDIHAAVMFQSLHSDGDYLRIQDNTLHGDAATVDAATRDNMRALVGIGERMLAQRVSRVNVETGRYVEVPGAGSNADALRGFARQLSEERRARLGRRNACGGGGEGEPSGVACKR.

The 205-residue stretch at 20-224 folds into the PNPLA domain; sequence LAIDGGGIRG…AANNPTMVAM (205 aa). Residues 24–29 carry the GXGXXG motif; the sequence is GGGIRG. Residues 62-66 carry the GXSXG motif; sequence GTSTG. Serine 64 acts as the Nucleophile in catalysis. The active-site Proton acceptor is aspartate 211. The DGA/G signature appears at 211-213; the sequence is DGG.

This sequence belongs to the patatin family.

Functionally, possesses non-specific lipolytic acyl hydrolase (LAH) activity. Hydrolyzes phospholipids as well as galactolipids. May play a role in disease resistance. The chain is Patatin-like protein 1 (PLP1) from Oryza sativa subsp. indica (Rice).